The sequence spans 72 residues: Brevinin-2GHc (72 aa).

The N-terminal stretch at 1–22 is a signal peptide; it reads MFTMKKSLLLLFFLGMISLSLC. Residues 23–42 constitute a propeptide that is removed on maturation; that stretch reads EQERGADEDEGEVEEQIKRS. Cys-64 and Cys-70 are joined by a disulfide.

Expressed by the skin glands.

It localises to the secreted. In terms of biological role, antimicrobial peptide. Active against the Gram-positive bacteria S.aureus FDA209P (MIC=9.8 ug/ml) and B.subtilis ATCC 6633 (MIC&gt;64 ug/ml), and the Gram-negative bacteria E.coli O111 (MIC=19.6 ug/ml) and E.coli ATCC 25922 (MIC=9.8 ug/ml). Not active against the fungus C.albicans. This chain is Brevinin-2GHc, found in Sylvirana guentheri (Gunther's frog).